A 74-amino-acid chain; its full sequence is Dermaseptin-B3 (74 aa).

A signal peptide spans 1–22; that stretch reads MAFLKKSVFLVLFLGLVSLSIC. Positions 23 to 43 are excised as a propeptide; it reads EEEKREEENEEKQEDDEQSEE.

In terms of tissue distribution, expressed by the skin glands.

Its subcellular location is the secreted. Possesses a potent antimicrobial activity against Gram-positive and Gram-negative bacteria. Probably acts by disturbing membrane functions with its amphipathic structure. The chain is Dermaseptin-B3 from Phyllomedusa bicolor (Two-colored leaf frog).